Here is a 93-residue protein sequence, read N- to C-terminus: Acylphosphatase (93 aa).

In terms of domain architecture, Acylphosphatase-like spans 6–93; sequence RAHVFISGRV…GEERGFSIIW (88 aa). Catalysis depends on residues Arg-21 and Asn-39.

The protein belongs to the acylphosphatase family.

It catalyses the reaction an acyl phosphate + H2O = a carboxylate + phosphate + H(+). The polypeptide is Acylphosphatase (acyP) (Roseiflexus sp. (strain RS-1)).